A 270-amino-acid polypeptide reads, in one-letter code: SURF1-like protein (270 aa).

The next 2 helical transmembrane spans lie at 7–29 and 246–265; these read GFKL…VYRY and YIGT…FRYM.

This sequence belongs to the SURF1 family.

Its subcellular location is the mitochondrion inner membrane. Its function is as follows. Probably involved in the biogenesis of the COX complex. This chain is SURF1-like protein (surf1-1), found in Dictyostelium discoideum (Social amoeba).